The following is a 145-amino-acid chain: D-aminoacyl-tRNA deacylase (145 aa).

The Gly-cisPro motif, important for rejection of L-amino acids motif lies at 137–138; that stretch reads GP.

Belongs to the DTD family. In terms of assembly, homodimer.

The protein resides in the cytoplasm. It catalyses the reaction glycyl-tRNA(Ala) + H2O = tRNA(Ala) + glycine + H(+). The enzyme catalyses a D-aminoacyl-tRNA + H2O = a tRNA + a D-alpha-amino acid + H(+). Its function is as follows. An aminoacyl-tRNA editing enzyme that deacylates mischarged D-aminoacyl-tRNAs. Also deacylates mischarged glycyl-tRNA(Ala), protecting cells against glycine mischarging by AlaRS. Acts via tRNA-based rather than protein-based catalysis; rejects L-amino acids rather than detecting D-amino acids in the active site. By recycling D-aminoacyl-tRNA to D-amino acids and free tRNA molecules, this enzyme counteracts the toxicity associated with the formation of D-aminoacyl-tRNA entities in vivo and helps enforce protein L-homochirality. The protein is D-aminoacyl-tRNA deacylase of Escherichia coli O7:K1 (strain IAI39 / ExPEC).